The chain runs to 62 residues: Photosystem II reaction center protein Z (62 aa).

A run of 2 helical transmembrane segments spans residues 8–28 (ALFA…VILA) and 41–61 (FSGA…NSFI).

Belongs to the PsbZ family. As to quaternary structure, PSII is composed of 1 copy each of membrane proteins PsbA, PsbB, PsbC, PsbD, PsbE, PsbF, PsbH, PsbI, PsbJ, PsbK, PsbL, PsbM, PsbT, PsbY, PsbZ, Psb30/Ycf12, at least 3 peripheral proteins of the oxygen-evolving complex and a large number of cofactors. It forms dimeric complexes.

The protein localises to the plastid. The protein resides in the chloroplast thylakoid membrane. Functionally, may control the interaction of photosystem II (PSII) cores with the light-harvesting antenna, regulates electron flow through the 2 photosystem reaction centers. PSII is a light-driven water plastoquinone oxidoreductase, using light energy to abstract electrons from H(2)O, generating a proton gradient subsequently used for ATP formation. This is Photosystem II reaction center protein Z from Chara vulgaris (Common stonewort).